The following is a 297-amino-acid chain: Phosphatidylserine decarboxylase proenzyme (297 aa).

Residues Asp-100, His-157, and Ser-263 each act as charge relay system; for autoendoproteolytic cleavage activity in the active site. Ser-263 (schiff-base intermediate with substrate; via pyruvic acid; for decarboxylase activity) is an active-site residue. Ser-263 carries the post-translational modification Pyruvic acid (Ser); by autocatalysis.

This sequence belongs to the phosphatidylserine decarboxylase family. PSD-B subfamily. Prokaryotic type I sub-subfamily. As to quaternary structure, heterodimer of a large membrane-associated beta subunit and a small pyruvoyl-containing alpha subunit. Pyruvate is required as a cofactor. Post-translationally, is synthesized initially as an inactive proenzyme. Formation of the active enzyme involves a self-maturation process in which the active site pyruvoyl group is generated from an internal serine residue via an autocatalytic post-translational modification. Two non-identical subunits are generated from the proenzyme in this reaction, and the pyruvate is formed at the N-terminus of the alpha chain, which is derived from the carboxyl end of the proenzyme. The autoendoproteolytic cleavage occurs by a canonical serine protease mechanism, in which the side chain hydroxyl group of the serine supplies its oxygen atom to form the C-terminus of the beta chain, while the remainder of the serine residue undergoes an oxidative deamination to produce ammonia and the pyruvoyl prosthetic group on the alpha chain. During this reaction, the Ser that is part of the protease active site of the proenzyme becomes the pyruvoyl prosthetic group, which constitutes an essential element of the active site of the mature decarboxylase.

Its subcellular location is the cell membrane. It carries out the reaction a 1,2-diacyl-sn-glycero-3-phospho-L-serine + H(+) = a 1,2-diacyl-sn-glycero-3-phosphoethanolamine + CO2. It participates in phospholipid metabolism; phosphatidylethanolamine biosynthesis; phosphatidylethanolamine from CDP-diacylglycerol: step 2/2. Its function is as follows. Catalyzes the formation of phosphatidylethanolamine (PtdEtn) from phosphatidylserine (PtdSer). This chain is Phosphatidylserine decarboxylase proenzyme, found in Actinobacillus pleuropneumoniae serotype 5b (strain L20).